Here is a 199-residue protein sequence, read N- to C-terminus: NADH-quinone oxidoreductase subunit C (199 aa).

It belongs to the complex I 30 kDa subunit family. As to quaternary structure, NDH-1 is composed of 14 different subunits. Subunits NuoB, C, D, E, F, and G constitute the peripheral sector of the complex.

The protein resides in the cell inner membrane. The enzyme catalyses a quinone + NADH + 5 H(+)(in) = a quinol + NAD(+) + 4 H(+)(out). Its function is as follows. NDH-1 shuttles electrons from NADH, via FMN and iron-sulfur (Fe-S) centers, to quinones in the respiratory chain. The immediate electron acceptor for the enzyme in this species is believed to be ubiquinone. Couples the redox reaction to proton translocation (for every two electrons transferred, four hydrogen ions are translocated across the cytoplasmic membrane), and thus conserves the redox energy in a proton gradient. The polypeptide is NADH-quinone oxidoreductase subunit C (Cupriavidus metallidurans (strain ATCC 43123 / DSM 2839 / NBRC 102507 / CH34) (Ralstonia metallidurans)).